The sequence spans 390 residues: 4-O-beta-D-mannosyl-D-glucose phosphorylase (390 aa).

This sequence belongs to the glycosyl hydrolase 130 family.

The enzyme catalyses 4-O-beta-D-mannopyranosyl-D-glucopyranose + phosphate = alpha-D-mannose 1-phosphate + D-glucose. Its function is as follows. Converts 4-O-beta-D-mannopyranosyl-D-glucopyranose (Man-Glc) to mannose 1-phosphate (Man1P) and glucose. Involved in a mannan catabolic pathway which feeds into glycolysis. The polypeptide is 4-O-beta-D-mannosyl-D-glucose phosphorylase (Bacteroides fragilis (strain ATCC 25285 / DSM 2151 / CCUG 4856 / JCM 11019 / LMG 10263 / NCTC 9343 / Onslow / VPI 2553 / EN-2)).